Reading from the N-terminus, the 421-residue chain is 3-isopropylmalate dehydratase large subunit (421 aa).

[4Fe-4S] cluster is bound by residues C300, C360, and C363.

The protein belongs to the aconitase/IPM isomerase family. LeuC type 2 subfamily. In terms of assembly, heterodimer of LeuC and LeuD. Requires [4Fe-4S] cluster as cofactor.

The enzyme catalyses (2R,3S)-3-isopropylmalate = (2S)-2-isopropylmalate. It participates in amino-acid biosynthesis; L-leucine biosynthesis; L-leucine from 3-methyl-2-oxobutanoate: step 2/4. Catalyzes the isomerization between 2-isopropylmalate and 3-isopropylmalate, via the formation of 2-isopropylmaleate. The polypeptide is 3-isopropylmalate dehydratase large subunit (Lachnoclostridium phytofermentans (strain ATCC 700394 / DSM 18823 / ISDg) (Clostridium phytofermentans)).